A 149-amino-acid polypeptide reads, in one-letter code: Small ribosomal subunit protein uS13 (149 aa).

It belongs to the universal ribosomal protein uS13 family. Part of the 30S ribosomal subunit. Forms a loose heterodimer with protein S19. Forms two bridges to the 50S subunit in the 70S ribosome.

Located at the top of the head of the 30S subunit, it contacts several helices of the 16S rRNA. In the 70S ribosome it contacts the 23S rRNA (bridge B1a) and protein L5 of the 50S subunit (bridge B1b), connecting the 2 subunits; these bridges are implicated in subunit movement. This chain is Small ribosomal subunit protein uS13, found in Thermococcus kodakarensis (strain ATCC BAA-918 / JCM 12380 / KOD1) (Pyrococcus kodakaraensis (strain KOD1)).